We begin with the raw amino-acid sequence, 155 residues long: MSRRGTTEEKTAKSDPIYRNRLVNMLVNRILKHGKKSLAYQIIYRAVKKIQQKTETNPLSVLRQAIRGVTPDIAVKARRVGGSTHQVPIEIGSTQGKALAIRWLLWASRKRPGRNMAFKLSSELLDAAKGSGDAIRKKEETHRMAEANRAFAHFR.

This sequence belongs to the universal ribosomal protein uS7 family. Part of the 30S ribosomal subunit.

Its subcellular location is the plastid. The protein resides in the chloroplast. Functionally, one of the primary rRNA binding proteins, it binds directly to 16S rRNA where it nucleates assembly of the head domain of the 30S subunit. This Houttuynia cordata (Chameleon plant) protein is Small ribosomal subunit protein uS7c (rps7).